We begin with the raw amino-acid sequence, 238 residues long: CD63 antigen (238 aa).

The Cytoplasmic segment spans residues 2–11 (AVEGGMKCVK). Residues 12–32 (FLLYVLLLAFCACAVGLIAVG) form a helical membrane-spanning segment. Residues 33–51 (VGAQLVLSQTIIQGATPGS) lie on the Extracellular side of the membrane. Residues 52–72 (LLPVVIIAVGVFLFLVAFVGC) form a helical membrane-spanning segment. The Cytoplasmic portion of the chain corresponds to 73–81 (CGACKENYC). A helical membrane pass occupies residues 82–102 (LMITFAIFLSLIMLVEVAAAI). The Extracellular segment spans residues 103–203 (AGYVFRDKVM…KIGGWLRKNV (101 aa)). N-linked (GlcNAc...) asparagine glycans are attached at residues Asn130, Asn150, and Asn172. A helical transmembrane segment spans residues 204-224 (LVVAAAALGIAFVEVLGIVFA). Over 225–238 (CCLVKSIRSGYEVM) the chain is Cytoplasmic. The short motif at 234–238 (GYEVM) is the Lysosomal targeting motif element.

Belongs to the tetraspanin (TM4SF) family. In terms of assembly, interacts with TIMP1 and ITGB1 and recruits TIMP1 to ITGB1. Interacts with CD9. Identified in a complex with CD9 and ITGB3. Interacts with PMEL. Interacts with KDR/VEGFR2; identified in a complex with ITGB1 and KDR/VEGFR2 and is required to recruit KDR to ITGB1 complexes. Interacts with SYT7. Palmitoylated at a low, basal level in unstimulated platelets. The level of palmitoylation increases when platelets are activated by thrombin (in vitro). In terms of tissue distribution, detected in platelets (at protein level). Dysplastic nevi, radial growth phase primary melanomas, hematopoietic cells, tissue macrophages.

The protein localises to the cell membrane. The protein resides in the lysosome membrane. It is found in the late endosome membrane. Its subcellular location is the endosome. It localises to the multivesicular body. The protein localises to the melanosome. The protein resides in the secreted. It is found in the extracellular exosome. Its subcellular location is the cell surface. Its function is as follows. Functions as a cell surface receptor for TIMP1 and plays a role in the activation of cellular signaling cascades. Plays a role in the activation of ITGB1 and integrin signaling, leading to the activation of AKT, FAK/PTK2 and MAP kinases. Promotes cell survival, reorganization of the actin cytoskeleton, cell adhesion, spreading and migration, via its role in the activation of AKT and FAK/PTK2. Plays a role in VEGFA signaling via its role in regulating the internalization of KDR/VEGFR2. Plays a role in intracellular vesicular transport processes, and is required for normal trafficking of the PMEL luminal domain that is essential for the development and maturation of melanocytes. Plays a role in the adhesion of leukocytes onto endothelial cells via its role in the regulation of SELP trafficking. May play a role in mast cell degranulation in response to Ms4a2/FceRI stimulation, but not in mast cell degranulation in response to other stimuli. This is CD63 antigen (CD63) from Homo sapiens (Human).